We begin with the raw amino-acid sequence, 176 residues long: dCTP deaminase (176 aa).

Residues 99–104 (RSTLAR) and D115 contribute to the dCTP site. Residue E125 is the Proton donor/acceptor of the active site. Residue Q163 participates in dCTP binding.

This sequence belongs to the dCTP deaminase family. Homotrimer.

It carries out the reaction dCTP + H2O + H(+) = dUTP + NH4(+). The protein operates within pyrimidine metabolism; dUMP biosynthesis; dUMP from dCTP (dUTP route): step 1/2. In terms of biological role, catalyzes the deamination of dCTP to dUTP. The chain is dCTP deaminase from Pyrobaculum neutrophilum (strain DSM 2338 / JCM 9278 / NBRC 100436 / V24Sta) (Thermoproteus neutrophilus).